The chain runs to 643 residues: Uromodulin (643 aa).

The first 26 residues, Met-1–Thr-26, serve as a signal peptide directing secretion. In terms of domain architecture, EGF-like 1 spans Lys-32–Val-66. Disulfide bonds link Cys-34–Cys-43, Cys-37–Cys-52, Cys-54–Cys-65, Cys-71–Cys-85, Cys-79–Cys-94, Cys-96–Cys-108, Cys-114–Cys-128, Cys-122–Cys-137, Cys-139–Cys-150, Cys-152–Cys-163, Cys-157–Cys-172, Cys-176–Cys-269, Cys-197–Cys-284, Cys-219–Cys-257, Cys-225–Cys-289, Cys-250–Cys-258, Cys-299–Cys-308, Cys-302–Cys-317, Cys-319–Cys-349, Cys-337–Cys-427, and Cys-368–Cys-391. N-linked (GlcNAc...) asparagine glycosylation is present at Asn-40. The EGF-like 2; calcium-binding domain occupies Asp-67–Glu-109. Residue Asn-78 is glycosylated (N-linked (GlcNAc...) asparagine). The EGF-like 3; calcium-binding domain occupies Asp-110–Glu-151. Asn-134 is a glycosylation site (N-linked (GlcNAc...) asparagine). Residues Cys-152–Val-173 are beta hairpin. Residues Asp-174–Ser-293 are D10C. Asn-234 carries an N-linked (GlcNAc...) asparagine glycan. Asn-277 carries an N-linked (GlcNAc...) asparagine glycan. Residues Ser-294 to Val-325 form the EGF-like 4 domain. N-linked (GlcNAc...) asparagine glycosylation occurs at Asn-324. Positions Glu-336–Leu-431 are ZP-N. The region spanning Glu-336–Thr-587 is the ZP domain. N-linked (GlcNAc...) asparagine glycans are attached at residues Asn-398 and Asn-449. The interval Asp-432–Thr-455 is flexible ZP-N/ZP-C linker; important for secretion and polymerization into filaments. The interval Gly-456–Gln-466 is internal hydrophobic patch (IHP). The ZP-C stretch occupies residues Gly-456 to Thr-587. Disulfide bonds link Cys-508–Cys-568, Cys-529–Cys-584, and Cys-573–Cys-580. N-linked (GlcNAc...) asparagine glycosylation occurs at Asn-515. The interval Arg-588–Ser-591 is essential for cleavage by HPN. The interval Val-600–Arg-608 is external hydrophobic patch (EHP); regulates polymerization into filaments. Residue Ser-621 is the site of GPI-anchor amidated serine attachment. A propeptide spans Ser-622–Pro-643 (removed in mature form).

Homodimer that then polymerizes into long filaments. The filaments can additionally assemble laterally to form a sheet. The filaments consist of a zigzag-shaped backbone with laterally protruding arms which interact with bacterial adhesin fimH. Two fimH molecules can bind to a single UMOD monomer. Post-translationally, N-glycosylated. Proteolytically cleaved at a conserved C-terminal proteolytic cleavage site to generate the secreted form found in urine. This cleavage is catalyzed by HPN.

It is found in the apical cell membrane. The protein resides in the basolateral cell membrane. The protein localises to the cell projection. It localises to the cilium membrane. Its subcellular location is the secreted. Functionally, functions in biogenesis and organization of the apical membrane of epithelial cells of the thick ascending limb of Henle's loop (TALH), where it promotes formation of complex filamentous gel-like structure that may play a role in the water barrier permeability. May serve as a receptor for binding and endocytosis of cytokines (IL-1, IL-2) and TNF. Facilitates neutrophil migration across renal epithelia. In the urine, may contribute to colloid osmotic pressure, retards passage of positively charged electrolytes, and inhibits formation of liquid containing supersaturated salts and subsequent formation of salt crystals. Protects against urinary tract infections by binding to type 1 fimbriated E.coli. Binds to bacterial adhesin fimH which mediates the stable formation of bacterial aggregates, prevents the binding of E.coli to uroplakins UPK1A and UPK1B which act as urothelial receptors for type I fimbriae, and allows for pathogen clearance through micturation. Also promotes aggregation of other bacteria including K.pneumoniae, P.aeruginosa and S.mitis and so may also protect against other uropathogens. In Bos taurus (Bovine), this protein is Uromodulin (UMOD).